Consider the following 860-residue polypeptide: Alanine--tRNA ligase (860 aa).

Residues His-553, His-557, Cys-655, and His-659 each contribute to the Zn(2+) site.

It belongs to the class-II aminoacyl-tRNA synthetase family. Zn(2+) is required as a cofactor.

Its subcellular location is the cytoplasm. The enzyme catalyses tRNA(Ala) + L-alanine + ATP = L-alanyl-tRNA(Ala) + AMP + diphosphate. Catalyzes the attachment of alanine to tRNA(Ala) in a two-step reaction: alanine is first activated by ATP to form Ala-AMP and then transferred to the acceptor end of tRNA(Ala). Also edits incorrectly charged Ser-tRNA(Ala) and Gly-tRNA(Ala) via its editing domain. The chain is Alanine--tRNA ligase from Legionella pneumophila (strain Lens).